The chain runs to 473 residues: Ribulose bisphosphate carboxylase large chain (473 aa).

Residues N116 and T166 each coordinate substrate. The active-site Proton acceptor is the K168. Residue K170 coordinates substrate. The Mg(2+) site is built by K194, D196, and E197. Position 194 is an N6-carboxylysine (K194). H287 acts as the Proton acceptor in catalysis. Substrate contacts are provided by R288, H320, and S372.

Belongs to the RuBisCO large chain family. Type I subfamily. Heterohexadecamer of 8 large chains and 8 small chains. The cofactor is Mg(2+).

The catalysed reaction is 2 (2R)-3-phosphoglycerate + 2 H(+) = D-ribulose 1,5-bisphosphate + CO2 + H2O. It carries out the reaction D-ribulose 1,5-bisphosphate + O2 = 2-phosphoglycolate + (2R)-3-phosphoglycerate + 2 H(+). Functionally, ruBisCO catalyzes two reactions: the carboxylation of D-ribulose 1,5-bisphosphate, the primary event in carbon dioxide fixation, as well as the oxidative fragmentation of the pentose substrate. Both reactions occur simultaneously and in competition at the same active site. The chain is Ribulose bisphosphate carboxylase large chain from Nitrosomonas sp. (strain ENI-11).